The chain runs to 357 residues: Trans-enoyl reductase resD (357 aa).

Tyrosine 211 provides a ligand contact to NADP(+).

It belongs to the zinc-containing alcohol dehydrogenase family.

Its pathway is antifungal biosynthesis. In terms of biological role, trans-enoyl reductase; part of the gene cluster that mediates the biosynthesis of the tetrahydropyranyl antifungal agent restricticin that acts as an inhibitor of CYP51 and blocks the ergosterol biosynthesis. The highly reducing polyketide synthase resH, the short chain dehydrogenase resG, the cyclase resF, the FAD-dependent monooxygenase resA and the enoylreductase resD are required to generate the first stable intermediate desmethylrestrictinol. ResH with resD biosynthesize the first polyketide chain intermediate that is reduced by resG, followed by epoxidation by resA before 6-endo cyclization via epoxide opening by resF leads to desmethylrestrictinol. The methyltransferase resE then catalyzes the C4 O-methylation of desmethylrestrictinol to produce restrictinol, and the nonribosomal peptide synthetase resC catalyzes the C3 esterification of restrictinol with glycine that leads to restricticin. The polypeptide is Trans-enoyl reductase resD (Aspergillus sclerotiorum).